Here is a 421-residue protein sequence, read N- to C-terminus: Diaminobutyrate--2-oxoglutarate transaminase (421 aa).

Lys-267 carries the post-translational modification N6-(pyridoxal phosphate)lysine.

This sequence belongs to the class-III pyridoxal-phosphate-dependent aminotransferase family. Homohexamer. Requires pyridoxal 5'-phosphate as cofactor.

The catalysed reaction is L-2,4-diaminobutanoate + 2-oxoglutarate = L-aspartate 4-semialdehyde + L-glutamate. It functions in the pathway amine and polyamine biosynthesis; ectoine biosynthesis; L-ectoine from L-aspartate 4-semialdehyde: step 1/3. Catalyzes reversively the conversion of L-aspartate beta-semialdehyde (ASA) to L-2,4-diaminobutyrate (DABA) by transamination with L-glutamate. Seems to use L-glutamate specifically as the amino group donor to ASA, as it is not active with L-alanine, L-glutamine, L-aspartate and L-lysine, and is only poorly active with L-homoserine. In the reverse reaction, gamma-aminobutyric acid (GABA) and L-ornithine can also be used as amino group donors to 2-oxoglutarate, but with a reduced activity compared to that with DABA. This Halomonas elongata (strain ATCC 33173 / DSM 2581 / NBRC 15536 / NCIMB 2198 / 1H9) protein is Diaminobutyrate--2-oxoglutarate transaminase (ectB).